A 345-amino-acid polypeptide reads, in one-letter code: S-adenosylmethionine:tRNA ribosyltransferase-isomerase (345 aa).

The protein belongs to the QueA family. As to quaternary structure, monomer.

Its subcellular location is the cytoplasm. It carries out the reaction 7-aminomethyl-7-carbaguanosine(34) in tRNA + S-adenosyl-L-methionine = epoxyqueuosine(34) in tRNA + adenine + L-methionine + 2 H(+). The protein operates within tRNA modification; tRNA-queuosine biosynthesis. Functionally, transfers and isomerizes the ribose moiety from AdoMet to the 7-aminomethyl group of 7-deazaguanine (preQ1-tRNA) to give epoxyqueuosine (oQ-tRNA). This chain is S-adenosylmethionine:tRNA ribosyltransferase-isomerase, found in Shewanella sp. (strain MR-4).